The primary structure comprises 313 residues: DNA-directed RNA polymerase subunit alpha (313 aa).

The segment at 1-226 (MLEIEKPKIE…EHLQLFVNLN (226 aa)) is alpha N-terminal domain (alpha-NTD). Residues 243-313 (KEKLAEMPIE…MGLSLRKEEE (71 aa)) are alpha C-terminal domain (alpha-CTD).

This sequence belongs to the RNA polymerase alpha chain family. Homodimer. The RNAP catalytic core consists of 2 alpha, 1 beta, 1 beta' and 1 omega subunit. When a sigma factor is associated with the core the holoenzyme is formed, which can initiate transcription.

The enzyme catalyses RNA(n) + a ribonucleoside 5'-triphosphate = RNA(n+1) + diphosphate. DNA-dependent RNA polymerase catalyzes the transcription of DNA into RNA using the four ribonucleoside triphosphates as substrates. This chain is DNA-directed RNA polymerase subunit alpha, found in Carboxydothermus hydrogenoformans (strain ATCC BAA-161 / DSM 6008 / Z-2901).